The chain runs to 162 residues: Small ribosomal subunit protein uS9 (162 aa).

It belongs to the universal ribosomal protein uS9 family.

The chain is Small ribosomal subunit protein uS9 from Methylobacterium nodulans (strain LMG 21967 / CNCM I-2342 / ORS 2060).